The sequence spans 327 residues: Protein UL95 homolog (327 aa).

It belongs to the herpesviridae UL95 family. In terms of assembly, interacts with ORF24; this interaction may serve as a core scaffold for the assembly of the viral transcription initiation complex. Interacts with ORF66. Interacts with ORF18. Interacts with ORF23. Interacts with ORF31. Interacts with host EPAS1; this interaction stabilizes host EPAS1, ensuring its transcriptional activity.

It localises to the host nucleus. Functionally, participates in the expression of late viral mRNAs in part by interacting with ORF24. Expressed before viral DNA replication, assembles at the viral pre-replication complexes (pre-RCs) and thus serves as a hub for recruiting a viral transcription complex to ORF24 to promote late viral gene expression. Also plays a regulatory role in the viral life cycle by regulating host transcriptional regulators HIF1A and EPAS1. The protein is Protein UL95 homolog (ORF34) of Homo sapiens (Human).